We begin with the raw amino-acid sequence, 285 residues long: Secreted RxLR effector protein 106 (285 aa).

Residues 1–24 (MSVRYAGLLLAAVAVSAHINEVNS) form the signal peptide. The RxLR-dEER motif lies at 42 to 54 (RDLRSADNGNEER). N-linked (GlcNAc...) asparagine glycans are attached at residues asparagine 182 and asparagine 187. Residues 220 to 229 (IEGDKEKKGG) are compositionally biased toward basic and acidic residues. The interval 220-262 (IEGDKEKKGGPDYVEGTESRGKKRGQTEAPDLEPGLTPKQKRL) is disordered. Residues 239–264 (RGKKRGQTEAPDLEPGLTPKQKRLKR) carry the Bipartite nuclear localization signal motif.

This sequence belongs to the RxLR effector family. As to quaternary structure, interacts with host RCD1 and SRO1 transcription co-regulators.

The protein localises to the secreted. It localises to the host nucleus. Secreted effector that suppresses pathogen-associated molecular pattern (PAMP)-triggered immunity (PTI) in host plants. Binds to RCD1 and SRO1 transcription co-regulators to attenuate transcriptional activation of salicylic acid (SA)-induced defense genes and alters plant growth responses to light. Suppresses SA signal transduction but not SA levels. The protein is Secreted RxLR effector protein 106 of Hyaloperonospora arabidopsidis (strain Emoy2) (Downy mildew agent).